Here is a 56-residue protein sequence, read N- to C-terminus: Large ribosomal subunit protein bL33 (56 aa).

This sequence belongs to the bacterial ribosomal protein bL33 family.

The sequence is that of Large ribosomal subunit protein bL33 from Orientia tsutsugamushi (strain Ikeda) (Rickettsia tsutsugamushi).